We begin with the raw amino-acid sequence, 438 residues long: MLALFLSSSSYPTLSFLSRSVTLNLARTTTLSALTMSMNLKTHAFAGNPLKSKTPKSTDPFSPTSAFESLKTLIPVIPNHSTPSPDFKVLPFSKGRPLVFSSGGDANTTPIWHLGWVSLADCKVLLASCGVDLNEDSLVYLGPKLEEDLVYWAVDLAEDGFVSELGGRKLCFVELRTLMVAADWADQRAMDELAIAGNARALLEWHNVSQFCGSCGSKTFPKEAGRRKQCSDETCRKRVYPRVDPVVIMLVIDRENDRALLSRQSRYVPRMWSCLAGFIEPGESLEEAVRRETWEETGIEVGDVVYHSSQPWPVGPSSMPCQLMLGFFAFAKTLDINVDKEELEDAQWHSREEVKKALAVAEYRKAQRTAAAKVEQICKGVERSQSLSTDFNLESGELAPMFIPGPFAIAHHLISAWVNQAPDDVHSKQQAGVSLSSL.

The transit peptide at 1–36 directs the protein to the chloroplast; sequence MLALFLSSSSYPTLSFLSRSVTLNLARTTTLSALTM. The Zn(2+) site is built by cysteine 212, cysteine 215, cysteine 230, and cysteine 235. Residues tyrosine 240, 276-278, glutamate 292, glutamate 296, and glutamate 342 contribute to the substrate site; that span reads AGF. The Nudix hydrolase domain occupies 241 to 371; that stretch reads PRVDPVVIML…EYRKAQRTAA (131 aa). Residues alanine 276, glutamate 292, glutamate 296, and glutamate 342 each coordinate Mg(2+). The Nudix box motif lies at 277–298; it reads GFIEPGESLEEAVRRETWEETG. Residues 422 to 424 carry the Microbody targeting signal motif; that stretch reads PDD.

This sequence belongs to the Nudix hydrolase family. NudC subfamily. Mg(2+) serves as cofactor. Requires Zn(2+) as cofactor. In terms of tissue distribution, expressed in roots, leaves, stems and inflorescences.

It is found in the plastid. Its subcellular location is the chloroplast. The catalysed reaction is a 5'-end NAD(+)-phospho-ribonucleoside in mRNA + H2O = a 5'-end phospho-adenosine-phospho-ribonucleoside in mRNA + beta-nicotinamide D-ribonucleotide + 2 H(+). The enzyme catalyses NAD(+) + H2O = beta-nicotinamide D-ribonucleotide + AMP + 2 H(+). It carries out the reaction NADH + H2O = reduced beta-nicotinamide D-ribonucleotide + AMP + 2 H(+). Its function is as follows. mRNA decapping enzyme that specifically removes the nicotinamide adenine dinucleotide (NAD) cap from a subset of mRNAs by hydrolyzing the diphosphate linkage to produce nicotinamide mononucleotide (NMN) and 5' monophosphate mRNA. The NAD-cap is present at the 5'-end of some RNAs; in contrast to the canonical N7 methylguanosine (m7G) cap, the NAD cap promotes mRNA decay. Mediates the hydrolysis of some nucleoside diphosphate derivatives. Has a high affinity for NADPH compared with that for NADH. The protein is Nudix hydrolase 19, chloroplastic (NUDT19) of Arabidopsis thaliana (Mouse-ear cress).